We begin with the raw amino-acid sequence, 852 residues long: Protein SEY1 (852 aa).

The Cytoplasmic segment spans residues 1-738 (MNGHFAAVGN…KRSAIGGITQ (738 aa)). Positions 47–283 (GFNYHLISVF…FVGGVFLPEY (237 aa)) constitute a GB1/RHD3-type G domain. Residue 57 to 64 (GSQSTGKS) participates in GTP binding. Positions 475–500 (QYRLFEKELDEVSARLRKEEMRRLAI) form a coiled coil. Residues 739-759 (VPLYFYIVLLIFGWNEIVMVL) form a helical membrane-spanning segment. At 760–762 (RNP) the chain is on the lumenal side. Residues 763–783 (MLFMLLLVMGGGTYVAYTLNL) form a helical membrane-spanning segment. Residues 784–852 (LGPMMQMANA…AQEVEEDDDI (69 aa)) are Cytoplasmic-facing. The tract at residues 825 to 852 (RSQDNGIGMDRLDSRGKKAQEVEEDDDI) is disordered. Basic and acidic residues predominate over residues 834 to 845 (DRLDSRGKKAQE).

It belongs to the TRAFAC class dynamin-like GTPase superfamily. GB1/RHD3 GTPase family. RHD3 subfamily.

The protein localises to the endoplasmic reticulum membrane. Its function is as follows. Cooperates with the reticulon proteins and tubule-shaping DP1 family proteins to generate and maintain the structure of the tubular endoplasmic reticulum network. Has GTPase activity, which is required for its function in ER organization. The sequence is that of Protein SEY1 from Chaetomium globosum (strain ATCC 6205 / CBS 148.51 / DSM 1962 / NBRC 6347 / NRRL 1970) (Soil fungus).